Here is a 282-residue protein sequence, read N- to C-terminus: Pantothenate synthetase (282 aa).

30–37 (MGYLHEGH) provides a ligand contact to ATP. Residue histidine 37 is the Proton donor of the active site. Glutamine 61 is a binding site for (R)-pantoate. Glutamine 61 is a binding site for beta-alanine. Residue 147 to 150 (GMKD) coordinates ATP. Glutamine 153 contributes to the (R)-pantoate binding site. ATP is bound by residues valine 176 and 184-187 (KSSR).

This sequence belongs to the pantothenate synthetase family. In terms of assembly, homodimer.

Its subcellular location is the cytoplasm. The catalysed reaction is (R)-pantoate + beta-alanine + ATP = (R)-pantothenate + AMP + diphosphate + H(+). The protein operates within cofactor biosynthesis; (R)-pantothenate biosynthesis; (R)-pantothenate from (R)-pantoate and beta-alanine: step 1/1. In terms of biological role, catalyzes the condensation of pantoate with beta-alanine in an ATP-dependent reaction via a pantoyl-adenylate intermediate. The polypeptide is Pantothenate synthetase (Bacillus mycoides (strain KBAB4) (Bacillus weihenstephanensis)).